The following is a 757-amino-acid chain: Protein hunchback (757 aa).

Disordered regions lie at residues 30–51 and 171–213; these read EPGH…PIPS and EKLQ…EDMK. The segment covering 39-51 has biased composition (polar residues); sequence SVASSPRQSPIPS. Over residues 197-213 the composition is skewed to basic and acidic residues; sequence EPEKEHDQMSNSSEDMK. C2H2-type zinc fingers lie at residues 239-261, 268-290, 296-318, and 324-348; these read YKCK…TRTH, LQCP…IRKH, FQCD…RKSH, and YRCA…KYGH. Disordered regions lie at residues 367–416, 511–535, and 602–694; these read DVYG…VATS, EQLQ…YERK, and MTSP…APPS. Low complexity-rich tracts occupy residues 397 to 414 and 512 to 521; these read VAAV…QPVA and QLQQQNQQQS. Over residues 522–531 the composition is skewed to acidic residues; that stretch reads DNEEEDQDDE. The segment covering 651-694 has biased composition (low complexity); that stretch reads ANTSASSTASSSGNSSNASSNSNGNSSSNSSSNGTTSAVAAPPS. 2 C2H2-type zinc fingers span residues 704-726 and 732-756; these read YECK…MGYH and FKCN…RNAH.

This sequence belongs to the hunchback C2H2-type zinc-finger protein family.

The protein resides in the nucleus. In terms of biological role, gap class segmentation protein that controls development of head structures. This is Protein hunchback (hb) from Drosophila sechellia (Fruit fly).